A 206-amino-acid chain; its full sequence is Ras-related protein RABG3a (206 aa).

15 to 22 is a binding site for GTP; that stretch reads GDSGVGKT. The short motif at 37 to 45 is the Effector region element; sequence YKATIGADF. GTP-binding positions include 63–67, 125–128, and 158–159; these read DTAGQ, NKID, and SA. S-geranylgeranyl cysteine attachment occurs at residues cysteine 204 and cysteine 206. Cysteine methyl ester is present on cysteine 206.

Belongs to the small GTPase superfamily. Rab family.

The protein localises to the cell membrane. In terms of biological role, intracellular vesicle trafficking and protein transport. This is Ras-related protein RABG3a (RABG3A) from Arabidopsis thaliana (Mouse-ear cress).